Reading from the N-terminus, the 132-residue chain is NADH-quinone oxidoreductase subunit I 1 (132 aa).

4Fe-4S ferredoxin-type domains lie at 42–71 and 81–110; these read LKVS…VEAG and ERYE…MTGQ. Residues C51, C54, C57, C61, C90, C93, C96, and C100 each coordinate [4Fe-4S] cluster.

It belongs to the complex I 23 kDa subunit family. In terms of assembly, NDH-1 is composed of 14 different subunits. Subunits NuoA, H, J, K, L, M, N constitute the membrane sector of the complex. [4Fe-4S] cluster is required as a cofactor.

The protein localises to the cell inner membrane. The enzyme catalyses a quinone + NADH + 5 H(+)(in) = a quinol + NAD(+) + 4 H(+)(out). NDH-1 shuttles electrons from NADH, via FMN and iron-sulfur (Fe-S) centers, to quinones in the respiratory chain. The immediate electron acceptor for the enzyme in this species is believed to be ubiquinone. Couples the redox reaction to proton translocation (for every two electrons transferred, four hydrogen ions are translocated across the cytoplasmic membrane), and thus conserves the redox energy in a proton gradient. This Geobacter sulfurreducens (strain ATCC 51573 / DSM 12127 / PCA) protein is NADH-quinone oxidoreductase subunit I 1.